Consider the following 709-residue polypeptide: MKTPISSILKSNGLGIFLYRSFITSTAVSYTYDRQDVRHSQSLSSLKNCNYNGYVAGFPNSIVSLTVCSGLRGMIQFENVSYGIEPVETLSGFIHVIYENTNQQAKIPDLGENQTYSWSDELDYQFRSNMKKSGFAVLRPRYIKTDIVVDKKLFDYMGSDTRVVLQKVIQIIGFINTMFSKLKLTVLINSVEIWSKENRIDFPEAPENLLVQFLHWKHKYRPQHISYLLAFVEHPASTGALYPGNLCKPIYGAAIALYPKGLSLESYSVIVLQLLSIGIGLTYDNADSCHCTGDVCLMTPKAIYSGGVKDFSTCSLDDFKYLSTQDLECLQDLPMERQKKKPSRPRRICGNGILEMNEQCDCGTLKNCTHKKCCDPMSCRLKSKAVCGSGECCGQDCKVKPVNVLCRKSKNECDFEEYCNGNDAYCVPDTFARNGQYCDSGQAFCYSGLCMTSNNQCMNLLGKYVRGASFACYEEFNSRNDRFGNCIRKFCSFENSLCGKLVCTWPFKRLLMKDNMSAAYGQIRDDLCISLYKGGRPLKTTLSTYSDMSERDETFVKDGTICGPDMFCLETQCKETRFLVDFQQCNTSRDCNDHGVCNNFNHCHCDKGYNPPYCESVKGQFGSIDDGHKYYIDEGKSAKQQNRGIHPKQQLQLILYITLPLIMIISAVFIKQSKLSRLCGRERSEGTSCITEDSVSNTKMTTNEGSTLH.

Residues 1–98 (MKTPISSILK…TLSGFIHVIY (98 aa)) constitute a propeptide that is removed on maturation. Over 1 to 649 (MKTPISSILK…QQNRGIHPKQ (649 aa)) the chain is Extracellular. The Peptidase M12B domain occupies 141–334 (RYIKTDIVVD…QDLECLQDLP (194 aa)). Disulfide bonds link Cys247/Cys329, Cys289/Cys314, Cys291/Cys296, Cys406/Cys426, Cys585/Cys597, Cys591/Cys603, and Cys605/Cys614. One can recognise a Disintegrin domain in the interval 346-434 (RRICGNGILE…YCVPDTFARN (89 aa)). In terms of domain architecture, EGF-like; calcium-binding spans 581–615 (DFQQCNTSRDCNDHGVCNNFNHCHCDKGYNPPYCE). Residues 650-670 (QLQLILYITLPLIMIISAVFI) traverse the membrane as a helical segment. At 671-709 (KQSKLSRLCGRERSEGTSCITEDSVSNTKMTTNEGSTLH) the chain is on the cytoplasmic side. The segment at 690–709 (ITEDSVSNTKMTTNEGSTLH) is disordered.

As to quaternary structure, interacts with TEX101. Detected in testis.

It localises to the membrane. In terms of biological role, this is a non catalytic metalloprotease-like protein. May play a role in sperm-egg fusion. The protein is Disintegrin and metalloproteinase domain-containing protein 5 (Adam5) of Rattus norvegicus (Rat).